The sequence spans 176 residues: Protein SPMIP1 (176 aa).

The tract at residues 55–80 (TLHPKAPLSPPPAPKSAPSKVPSPVP) is disordered. Over residues 61 to 80 (PLSPPPAPKSAPSKVPSPVP) the composition is skewed to pro residues.

This Homo sapiens (Human) protein is Protein SPMIP1.